The chain runs to 426 residues: Phosphomethylpyrimidine synthase (426 aa).

Substrate-binding positions include Asn65, Met94, Tyr123, His162, Ser184–Gly186, Asp225–Arg228, and Glu264. Zn(2+) is bound at residue His268. Tyr291 provides a ligand contact to substrate. His332 lines the Zn(2+) pocket. 3 residues coordinate [4Fe-4S] cluster: Cys408, Cys411, and Cys415.

It belongs to the ThiC family. Requires [4Fe-4S] cluster as cofactor.

It catalyses the reaction 5-amino-1-(5-phospho-beta-D-ribosyl)imidazole + S-adenosyl-L-methionine = 4-amino-2-methyl-5-(phosphooxymethyl)pyrimidine + CO + 5'-deoxyadenosine + formate + L-methionine + 3 H(+). It participates in cofactor biosynthesis; thiamine diphosphate biosynthesis. Catalyzes the synthesis of the hydroxymethylpyrimidine phosphate (HMP-P) moiety of thiamine from aminoimidazole ribotide (AIR) in a radical S-adenosyl-L-methionine (SAM)-dependent reaction. The chain is Phosphomethylpyrimidine synthase from Methanococcus maripaludis (strain C7 / ATCC BAA-1331).